The following is a 116-amino-acid chain: Beta-2-microglobulin (116 aa).

The first 19 residues, 1 to 19 (MRALITFALLCLLYITVQG), serve as a signal peptide directing secretion. An Ig-like C1-type domain is found at 24–111 (PKVHVYSHFP…RHMKETKKFS (88 aa)). Cysteines 44 and 99 form a disulfide.

The protein belongs to the beta-2-microglobulin family. As to quaternary structure, heterodimer of an alpha chain and a beta chain. Beta-2-microglobulin is the beta-chain of major histocompatibility complex class I molecules.

Its subcellular location is the secreted. Component of the class I major histocompatibility complex (MHC). Involved in the presentation of peptide antigens to the immune system. This is Beta-2-microglobulin (b2m) from Danio rerio (Zebrafish).